Reading from the N-terminus, the 526-residue chain is Putative NipSnap protein K02D10.1 (526 aa).

This sequence belongs to the NipSnap family.

In Caenorhabditis elegans, this protein is Putative NipSnap protein K02D10.1.